The chain runs to 137 residues: MSKPLSFISMVAVILLASSTVKLAQGTLCSEKLNEVLSMVCEEYNPVIPHKRAMPGADSDLDALNPLQFVQEFEEEDNSISEPLRSALFPGSYLGGVLNSLAEVRRRTRQRQGIVERCCKKSCDMKALREYCSVVRN.

The N-terminal stretch at 1 to 26 (MSKPLSFISMVAVILLASSTVKLAQG) is a signal peptide. 3 disulfides stabilise this stretch: Cys29–Cys119, Cys41–Cys132, and Cys118–Cys123. The propeptide at 53-104 (AMPGADSDLDALNPLQFVQEFEEEDNSISEPLRSALFPGSYLGGVLNSLAEV) is connecting peptide.

This sequence belongs to the insulin family. In terms of assembly, heterodimer of a B chain and an A chain linked by two disulfide bonds. Broadly expressed at a low level in the embryonic mesoderm, beginning at stage 12. Expressed at a high level in the embryonic anterior midgut, with expression diminishing at late stage 16. Expressed at a low level in larval imaginal disks. Expressed at a high level in larval salivary glands and in seven cells of each larval brain hemisphere that may correspond to neurosecretory cells.

It is found in the secreted. In terms of biological role, possible ligand of InR/insulin-like receptor. Its function is as follows. Plays a role in regulating body size by increasing cell size and cell number of individual organs. Probably mediates its growth effects by acting as a ligand for the insulin receptor and transducing a signal via the Chico/PI3K/Akt(PKB) pathway. The polypeptide is Insulin-like peptide 2 (Drosophila melanogaster (Fruit fly)).